We begin with the raw amino-acid sequence, 196 residues long: Imidazole glycerol phosphate synthase subunit HisH (196 aa).

One can recognise a Glutamine amidotransferase type-1 domain in the interval 2-196 (KIIIINTNCS…EQLIKNFLEI (195 aa)). Catalysis depends on Cys77, which acts as the Nucleophile. Active-site residues include His178 and Glu180.

In terms of assembly, heterodimer of HisH and HisF.

Its subcellular location is the cytoplasm. The catalysed reaction is 5-[(5-phospho-1-deoxy-D-ribulos-1-ylimino)methylamino]-1-(5-phospho-beta-D-ribosyl)imidazole-4-carboxamide + L-glutamine = D-erythro-1-(imidazol-4-yl)glycerol 3-phosphate + 5-amino-1-(5-phospho-beta-D-ribosyl)imidazole-4-carboxamide + L-glutamate + H(+). The enzyme catalyses L-glutamine + H2O = L-glutamate + NH4(+). It functions in the pathway amino-acid biosynthesis; L-histidine biosynthesis; L-histidine from 5-phospho-alpha-D-ribose 1-diphosphate: step 5/9. IGPS catalyzes the conversion of PRFAR and glutamine to IGP, AICAR and glutamate. The HisH subunit catalyzes the hydrolysis of glutamine to glutamate and ammonia as part of the synthesis of IGP and AICAR. The resulting ammonia molecule is channeled to the active site of HisF. The sequence is that of Imidazole glycerol phosphate synthase subunit HisH from Blochmanniella floridana.